Reading from the N-terminus, the 585-residue chain is Organic cation transporter 1 (585 aa).

The Cytoplasmic segment spans residues 1-40 (MSFQAMETFAEISQEILMSATKPPDFDFVLEQVGNYGTYQ). Residues 41 to 61 (IVFFFIICLPTSLPSAFSAFN) traverse the membrane as a helical segment. Over 62 to 155 (IPFVVGNPPH…LVCDQQAWIE (94 aa)) the chain is Extracellular. Asn87, Asn98, and Asn133 each carry an N-linked (GlcNAc...) asparagine glycan. The helical transmembrane segment at 156–176 (ISTTSFYVGSFIGNCLFGYVA) threads the bilayer. Residues 177-184 (DKFGRRRS) lie on the Cytoplasmic side of the membrane. The chain crosses the membrane as a helical span at residues 185 to 205 (FFVILTVLIVCGTASSFAKDI). The Extracellular segment spans residues 206–212 (ESFIILR). Residues 213–233 (FFTGLAFPALFQIPFIICMEF) traverse the membrane as a helical segment. Residues 234–243 (MGNSGRIFSG) lie on the Cytoplasmic side of the membrane. A helical transmembrane segment spans residues 244–264 (LMTSLFFGAAMALLGVVAMFI). The Extracellular portion of the chain corresponds to 265-269 (RRWRQ). The chain crosses the membrane as a helical span at residues 270–290 (LTFFCNAPFAFYIIYYFFLPE). Residues 291–360 (SPRWSVSVGK…FKTPNLRRKT (70 aa)) are Cytoplasmic-facing. Residues 361–381 (LIVTYIWVMNAIIYNGLTLNV) traverse the membrane as a helical segment. Residues 382-389 (SNLPVDDY) are Extracellular-facing. A helical membrane pass occupies residues 390-410 (WSFIINGAVELPGYFVVWPLL). The Cytoplasmic segment spans residues 411 to 416 (QCAGRR). Residues 417 to 437 (WTLAATMIVCGIGCVSAMFMP) traverse the membrane as a helical segment. Residues 438–446 (DGYPWLVAS) are Extracellular-facing. A helical transmembrane segment spans residues 447–467 (ASFIGKFGVGSGFAVIYIFAG). Over 468–476 (ELYPTVVRA) the chain is Cytoplasmic. The chain crosses the membrane as a helical span at residues 477–497 (IGMGMSSMVAGSGLLLAPHIV). The Extracellular portion of the chain corresponds to 498-504 (NLGKIVK). Residues 505–525 (ILPLLIMGLMALSAGILTFFL) form a helical membrane-spanning segment. Residues 526-585 (PETLGAPLPMTIEDAENFGKKPEPDSGMFTQAAKKRESQPLLEPHTPMDRRRRSSRLMNI) lie on the Cytoplasmic side of the membrane. Residues 544-585 (GKKPEPDSGMFTQAAKKRESQPLLEPHTPMDRRRRSSRLMNI) are disordered. Positions 575–585 (RRRRSSRLMNI) are enriched in basic residues.

It belongs to the major facilitator (TC 2.A.1) superfamily. Organic cation transporter (TC 2.A.1.19) family.

It localises to the membrane. Its function is as follows. Transports organic cations such as tetraethylammonium (TEA). Displays a broad substrate specificity. This Caenorhabditis elegans protein is Organic cation transporter 1 (oct-1).